Reading from the N-terminus, the 382-residue chain is Prostaglandin D2 receptor 2 (382 aa).

Topologically, residues 1 to 32 are extracellular; sequence MANVTLKPLCPLLEEMVQLPNHSNSSLRYIDH. Residues Asn3, Asn21, and Asn24 are each glycosylated (N-linked (GlcNAc...) asparagine). Residues 33 to 55 form a helical membrane-spanning segment; sequence VSVLLHGLASLLGLVENGLILFV. The Cytoplasmic portion of the chain corresponds to 56–66; that stretch reads VGCRMRQTVVT. The helical transmembrane segment at 67 to 88 threads the bilayer; it reads TWVLHLALSDLLAAASLPFFTY. Topologically, residues 89–105 are extracellular; it reads FLAVGHSWELGTTFCKL. Residues Cys103 and Cys181 are joined by a disulfide bond. A helical transmembrane segment spans residues 106 to 126; sequence HSSVFFLNMFASGFLLSAISL. The Cytoplasmic portion of the chain corresponds to 127–145; that stretch reads DRCLQVVRPVWAQNHRTVA. Residues 146 to 167 form a helical membrane-spanning segment; sequence VAHRVCLMLWALAVLNTIPYFV. The Extracellular segment spans residues 168 to 209; it reads FRDTIPRLDGRIMCYYNLLLWNPGPDRDTTCDYRQKALAVSK. A helical transmembrane segment spans residues 210 to 230; it reads FLLAFMVPLAIIASSHVAVSL. At 231–246 the chain is on the cytoplasmic side; the sequence is RLHHRGRQRTGRFVRL. Residues 247 to 268 form a helical membrane-spanning segment; it reads VAAIVVAFVLCWGPYHIFSLLE. Residues 269-287 are Extracellular-facing; sequence ARAHSVTTLRQLASRGLPF. A helical transmembrane segment spans residues 288-307; sequence VTSLAFFNSVVNPLLYVFTC. Topologically, residues 308–357 are cytoplasmic; that stretch reads PDMLYKLRRSLRAVLESVLVEDSDQSGGLRNRRRRASSTATPASTLLLAD. The Involved in the recycling of CRTH2 signature appears at 329–332; it reads DSDQ. Phosphoserine occurs at positions 330 and 344.

Belongs to the G-protein coupled receptor 1 family. In terms of processing, phosphorylated.

It localises to the cell membrane. In terms of biological role, receptor for prostaglandin D2 (PGD2). Coupled to the G(i)-protein. Receptor activation may result in pertussis toxin-sensitive decreases in cAMP levels and Ca(2+) mobilization. PI3K signaling is also implicated in mediating PTGDR2 effects. PGD2 induced receptor internalization. CRTH2 internalization can be regulated by diverse kinases such as, PKC, PKA, GRK2, GPRK5/GRK5 and GRK6. Receptor activation is responsible, at least in part, in immune regulation and allergic/inflammation responses. In Mus musculus (Mouse), this protein is Prostaglandin D2 receptor 2 (Ptgdr2).